The following is a 288-amino-acid chain: Protein CREG2 (288 aa).

The N-terminal stretch at 1–31 (MSLSGRERPAWPGSRLSWLLCCSALLSPAAG) is a signal peptide. The segment at 78–100 (AHKEDTHLRPRGSARARPAPAAR) is disordered. The N-linked (GlcNAc...) asparagine glycan is linked to Asn164.

The protein belongs to the CREG family. As to expression, brain specific.

The protein resides in the secreted. This is Protein CREG2 (Creg2) from Mus musculus (Mouse).